We begin with the raw amino-acid sequence, 212 residues long: Nascent polypeptide-associated complex subunit alpha (212 aa).

2 disordered regions span residues 1 to 54 (MSNP…SRNE) and 123 to 177 (QLAA…EDKD). Over residues 22–38 (AEDEGSDSSDSEAEGEE) the composition is skewed to acidic residues. Residues 51 to 116 (SRNEKKARKS…AKIEDLNSQA (66 aa)) enclose the NAC-A/B domain. Basic and acidic residues predominate over residues 128 to 157 (ESHDHAGHDHSGHDHSHDHGKGKAVDTEEK). Residues 158-169 (KEEEEDDTEEVD) show a composition bias toward acidic residues. In terms of domain architecture, UBA spans 173 to 212 (LEDKDIELVMTQASVSRNKAVKALKENDNDIVNSIMALSI).

This sequence belongs to the NAC-alpha family. As to quaternary structure, part of the nascent polypeptide-associated complex (NAC), consisting of EGD2 and EGD1. NAC associates with ribosomes via EGD1.

It is found in the cytoplasm. Its subcellular location is the nucleus. Component of the nascent polypeptide-associated complex (NAC), a dynamic component of the ribosomal exit tunnel, protecting the emerging polypeptides from interaction with other cytoplasmic proteins to ensure appropriate nascent protein targeting. The NAC complex also promotes mitochondrial protein import by enhancing productive ribosome interactions with the outer mitochondrial membrane and blocks the inappropriate interaction of ribosomes translating non-secretory nascent polypeptides with translocation sites in the membrane of the endoplasmic reticulum. EGD2 may also be involved in transcription regulation. In Botryotinia fuckeliana (strain B05.10) (Noble rot fungus), this protein is Nascent polypeptide-associated complex subunit alpha (egd2).